The chain runs to 77 residues: Cold shock protein YdfK (77 aa).

To E.coli YnaE.

This chain is Cold shock protein YdfK (ydfK), found in Escherichia coli (strain K12).